A 570-amino-acid polypeptide reads, in one-letter code: MAQEVSEYLSQNPRVAAWVETLRCEGETDKHWRHRREFLLRNAGDLVPATEETADAESGARSRQLQQLVSFSMAWANHVFLGCRYPQKVMDKILSMAEGIKVTDAPIHTTRDELVAKVKKRGISSSNEGVEEPSKKRSIEGKNNSSVERDHGKKSAKTDRSAQQENSSGSKGSSTKSESSGTSARSNSGVSHQNSSTSEGDRSVCSQSSSNSSQVTSAGSGKASEPEAPDKHGSASFVSSLLKSSLNSHVTKSTDSRQHSGSPRKNALEGSSVSVSQSSSEIEVPLLGSSGSSEVELPLLSCKSSSETASSGLTTKASSEANISSSVSKNSSSSGTSLLMPKSSSTNTSLLTSQVAASLLASKSSSQSSGSVASKSTSLGSMSQLASKSSSQSSTSQLPSKSTSQSSESSVKFTCRKLTNEDIKQKQPFFNRLYKTVAWKLVAVGGFSPNVNHGELLNAAIEALKATLDVFFVPLKELADLPQNKSSQESIVCELRCKSVYLGTGCGKSKENAKAVASREALKLFLKKKVVVKICKRKYRGNEIEDLVLLDEESRPVNLPPALKHPQELL.

Ala2 is modified (N-acetylalanine). Positions 19-126 (VETLRCEGET…KVKKRGISSS (108 aa)) constitute an XRN2-binding (XTBD) domain. The interval 122 to 345 (GISSSNEGVE…TSLLMPKSSS (224 aa)) is disordered. The residue at position 124 (Ser124) is a Phosphoserine. Residues 147 to 162 (VERDHGKKSAKTDRSA) are compositionally biased toward basic and acidic residues. Low complexity predominate over residues 167–183 (SSGSKGSSTKSESSGTS). Residue Lys176 forms a Glycyl lysine isopeptide (Lys-Gly) (interchain with G-Cter in SUMO1) linkage. Positions 184-198 (ARSNSGVSHQNSSTS) are enriched in polar residues. Residues 203-221 (SVCSQSSSNSSQVTSAGSG) show a composition bias toward low complexity. The segment covering 224 to 233 (SEPEAPDKHG) has biased composition (basic and acidic residues). Ser234 carries the phosphoserine modification. 2 stretches are compositionally biased toward low complexity: residues 234–248 (SASF…SLNS) and 271–301 (SSVS…PLLS). Positions 302 to 317 (CKSSSETASSGLTTKA) are enriched in polar residues. Residues 318-345 (SSEANISSSVSKNSSSSGTSLLMPKSSS) show a composition bias toward low complexity. Ser378 carries the post-translational modification Phosphoserine. Positions 383–407 (SQLASKSSSQSSTSQLPSKSTSQSS) are disordered. Positions 452–527 (NHGELLNAAI…SREALKLFLK (76 aa)) constitute a DRBM domain.

This sequence belongs to the CARF family. In terms of assembly, interacts with CDKN2A/p14ARF, p53/TP53 and MDM2. Interacts with CHEK2 and MAPK3. Interacts with XRN2. Post-translationally, may be ubiquitinated.

The protein localises to the nucleus. It localises to the nucleoplasm. In terms of biological role, regulates DNA damage response and cell proliferation in a dose-dependent manner through a number of signaling pathways involved in cell proliferation, apoptosis and senescence. This Rattus norvegicus (Rat) protein is CDKN2A-interacting protein (Cdkn2aip).